The sequence spans 1097 residues: DNA polymerase catalytic subunit (1097 aa).

The interval Arg-1069–Thr-1097 is disordered. Residues Asp-1078–Thr-1097 are compositionally biased toward basic and acidic residues.

It belongs to the DNA polymerase type-B family.

The protein resides in the host nucleus. It carries out the reaction DNA(n) + a 2'-deoxyribonucleoside 5'-triphosphate = DNA(n+1) + diphosphate. The protein is DNA polymerase catalytic subunit (UL54) of Murid herpesvirus 1 (strain Smith) (MuHV-1).